The primary structure comprises 332 residues: Anthranilate phosphoribosyltransferase (332 aa).

5-phospho-alpha-D-ribose 1-diphosphate contacts are provided by residues Gly79, 82 to 83 (GD), Ser87, 89 to 92 (NIST), 107 to 115 (KHGNRSVSS), and Ser119. Gly79 is a binding site for anthranilate. Position 91 (Ser91) interacts with Mg(2+). Asn110 lines the anthranilate pocket. Residue Arg165 coordinates anthranilate. Mg(2+) is bound by residues Asp223 and Glu224.

It belongs to the anthranilate phosphoribosyltransferase family. In terms of assembly, homodimer. Requires Mg(2+) as cofactor.

It carries out the reaction N-(5-phospho-beta-D-ribosyl)anthranilate + diphosphate = 5-phospho-alpha-D-ribose 1-diphosphate + anthranilate. It functions in the pathway amino-acid biosynthesis; L-tryptophan biosynthesis; L-tryptophan from chorismate: step 2/5. Catalyzes the transfer of the phosphoribosyl group of 5-phosphorylribose-1-pyrophosphate (PRPP) to anthranilate to yield N-(5'-phosphoribosyl)-anthranilate (PRA). In Serratia proteamaculans (strain 568), this protein is Anthranilate phosphoribosyltransferase.